We begin with the raw amino-acid sequence, 214 residues long: Probable transaldolase (214 aa).

Lys-83 functions as the Schiff-base intermediate with substrate in the catalytic mechanism.

Belongs to the transaldolase family. Type 3B subfamily.

The protein resides in the cytoplasm. The catalysed reaction is D-sedoheptulose 7-phosphate + D-glyceraldehyde 3-phosphate = D-erythrose 4-phosphate + beta-D-fructose 6-phosphate. Its pathway is carbohydrate degradation; pentose phosphate pathway; D-glyceraldehyde 3-phosphate and beta-D-fructose 6-phosphate from D-ribose 5-phosphate and D-xylulose 5-phosphate (non-oxidative stage): step 2/3. Transaldolase is important for the balance of metabolites in the pentose-phosphate pathway. The protein is Probable transaldolase of Brevibacillus brevis (strain 47 / JCM 6285 / NBRC 100599).